The following is a 200-amino-acid chain: GTP-binding protein rho2 (200 aa).

15–22 (GDGACGKT) contacts GTP. An Effector region motif is present at residues 37–45 (YVPTVFENY). GTP is bound by residues 62–66 (DTAGQ) and 120–123 (MKAD). A Cysteine methyl ester modification is found at Cys-197. The S-geranylgeranyl cysteine moiety is linked to residue Cys-197. Residues 198–200 (IIS) constitute a propeptide, removed in mature form.

The protein belongs to the small GTPase superfamily. Rho family. In terms of assembly, interacts with pck2.

The protein localises to the cell membrane. In terms of biological role, involved in cell morphogenesis, the maintenance of growth direction, control of polarity and of cell wall integrity. Regulates the synthesis of alpha-D-glucan through activation of pck2. This Schizosaccharomyces pombe (strain 972 / ATCC 24843) (Fission yeast) protein is GTP-binding protein rho2 (rho2).